Here is a 481-residue protein sequence, read N- to C-terminus: 3-isopropylmalate dehydratase large subunit (481 aa).

[4Fe-4S] cluster-binding residues include cysteine 363, cysteine 423, and cysteine 426. A disordered region spans residues 437–463; sequence GQRAASTSNRNFEGRQGRGGRTHLVSP.

It belongs to the aconitase/IPM isomerase family. LeuC type 1 subfamily. As to quaternary structure, heterodimer of LeuC and LeuD. [4Fe-4S] cluster is required as a cofactor.

The enzyme catalyses (2R,3S)-3-isopropylmalate = (2S)-2-isopropylmalate. The protein operates within amino-acid biosynthesis; L-leucine biosynthesis; L-leucine from 3-methyl-2-oxobutanoate: step 2/4. Catalyzes the isomerization between 2-isopropylmalate and 3-isopropylmalate, via the formation of 2-isopropylmaleate. This Salinispora arenicola (strain CNS-205) protein is 3-isopropylmalate dehydratase large subunit.